Here is a 115-residue protein sequence, read N- to C-terminus: Large ribosomal subunit protein bL19 (115 aa).

This sequence belongs to the bacterial ribosomal protein bL19 family.

In terms of biological role, this protein is located at the 30S-50S ribosomal subunit interface and may play a role in the structure and function of the aminoacyl-tRNA binding site. The chain is Large ribosomal subunit protein bL19 from Streptococcus pyogenes serotype M49 (strain NZ131).